Reading from the N-terminus, the 98-residue chain is Large ribosomal subunit protein uL23 (98 aa).

It belongs to the universal ribosomal protein uL23 family. As to quaternary structure, part of the 50S ribosomal subunit. Contacts protein L29, and trigger factor when it is bound to the ribosome.

One of the early assembly proteins it binds 23S rRNA. One of the proteins that surrounds the polypeptide exit tunnel on the outside of the ribosome. Forms the main docking site for trigger factor binding to the ribosome. In Rickettsia typhi (strain ATCC VR-144 / Wilmington), this protein is Large ribosomal subunit protein uL23.